Here is a 201-residue protein sequence, read N- to C-terminus: 3-isopropylmalate dehydratase small subunit (201 aa).

Belongs to the LeuD family. LeuD type 1 subfamily. As to quaternary structure, heterodimer of LeuC and LeuD.

It carries out the reaction (2R,3S)-3-isopropylmalate = (2S)-2-isopropylmalate. The protein operates within amino-acid biosynthesis; L-leucine biosynthesis; L-leucine from 3-methyl-2-oxobutanoate: step 2/4. Functionally, catalyzes the isomerization between 2-isopropylmalate and 3-isopropylmalate, via the formation of 2-isopropylmaleate. The polypeptide is 3-isopropylmalate dehydratase small subunit (Methylorubrum extorquens (strain CM4 / NCIMB 13688) (Methylobacterium extorquens)).